A 519-amino-acid chain; its full sequence is MAAEAADLGLGAAVPVELRRERRMVCVEYPGVVRDVAKMLPTLGGEEGVSRIYADPTKRLELYFRPKDPYCHPVCANRFSTSSLLLRIRKRTRRQKGVLGTEAHSEVTFDMEILGIISTIYKFQGMSDFQYLAVHTEAGGKHTSMYDKVLMLRPEKEAFFHQELPLYIPPPIFSRLDAPVDYFYRPETQHREGYNNPPISGENLIGLSRARRPHNAIFVNFEDEEVPKQPLEAAAQTWRRVCTNPVDRKVEEELRKLFDIRPIWSRNAVKANISVHPDKLKVLLPFIAYYMITGPWRSLWIRFGYDPRKNPDAKIYQVLDFRIRCGMKHGYAPSDLPVKAKRSTYNYSLPITVKKTSSQLVTMHDLKQGLGPSGTSGARKPASSKYKLKDSVYIFREGALPPYRQMFYQLCDLNVEELQKIIHRNDGAENSCTERDGWCLPKTSDELRDTMSLMIRQTIRSKRPALFSSSAKADGGKEQLTYESGEDEEDEEEEEEEEEDFKPSDGSENEMETEILDYV.

At Ala2 the chain carries N-acetylalanine. The segment at 465-519 (ALFSSSAKADGGKEQLTYESGEDEEDEEEEEEEEEDFKPSDGSENEMETEILDYV) is disordered. 2 stretches are compositionally biased toward acidic residues: residues 484–500 (SGED…EEED) and 507–519 (SENE…LDYV).

This sequence belongs to the TFIIIC subunit 5 family. As to quaternary structure, part of the TFIIIC subcomplex TFIIIC2, consisting of six subunits, GTF3C1, GTF3C2, GTF3C3, GTF3C4, GTF3C5 and GTF3C6. Interacts with BRF1, GTF3C6 and TBP.

The protein resides in the nucleus. Involved in RNA polymerase III-mediated transcription. Integral, tightly associated component of the DNA-binding TFIIIC2 subcomplex that directly binds tRNA and virus-associated RNA promoters. This Homo sapiens (Human) protein is General transcription factor 3C polypeptide 5 (GTF3C5).